We begin with the raw amino-acid sequence, 396 residues long: Enoyl-[acyl-carrier-protein] reductase [NADH] (396 aa).

Residues 48–53 (GASTGY), 74–75 (FE), 111–112 (DA), and 139–140 (LA) contribute to the NAD(+) site. Tyr-225 contributes to the substrate binding site. Tyr-235 (proton donor) is an active-site residue. NAD(+) is bound by residues Lys-244 and 273 to 275 (VVT).

This sequence belongs to the TER reductase family. As to quaternary structure, monomer.

The enzyme catalyses a 2,3-saturated acyl-[ACP] + NAD(+) = a (2E)-enoyl-[ACP] + NADH + H(+). It participates in lipid metabolism; fatty acid biosynthesis. Functionally, involved in the final reduction of the elongation cycle of fatty acid synthesis (FAS II). Catalyzes the reduction of a carbon-carbon double bond in an enoyl moiety that is covalently linked to an acyl carrier protein (ACP). The protein is Enoyl-[acyl-carrier-protein] reductase [NADH] of Teredinibacter turnerae (strain ATCC 39867 / T7901).